The following is a 521-amino-acid chain: Sphingolipid C9-methyltransferase 2 (521 aa).

Transmembrane regions (helical) follow at residues 60 to 80 and 85 to 105; these read VLISILTIVPWWLSWKVGGGF and FFAIIVDLPMLAAWWLTISAI. S-adenosyl-L-methionine is bound by residues 225–226, 262–270, 288–293, and 318–319; these read YT, MLDIGCGWG, TLGRNQ, and YR.

The protein belongs to the CFA/CMAS family.

The protein resides in the membrane. The catalysed reaction is a (4E,8E)-4-sphinga-4,8-dienine ceramide + S-adenosyl-L-methionine = a 9-methyl-(4E,8E)-sphinga-4,8-dienine ceramide + S-adenosyl-L-homocysteine + H(+). It participates in lipid metabolism; sphingolipid metabolism. Catalyzes methylation of the sphingoid base component of glucosylceramides (GluCers) at the C9-position. Sphingolipid C9-methylation requires 4,8-desaturated ceramides as substrates. Glucosylceramides play important roles in growth, differentiation and pathogenicity. The methyl group at the C9-position distinguishes fungal glucosylceramides from those of plants and animals and may thus play a role in host-pathogen interactions enabling the host to recognize the fungal attack and initiate specific defense responses. However, C-9 methylation of GlcCers is not essential for the sensitivity of F.graminearum to plant defensins MsDef1 and RsAFP2. This is Sphingolipid C9-methyltransferase 2 from Gibberella zeae (strain ATCC MYA-4620 / CBS 123657 / FGSC 9075 / NRRL 31084 / PH-1) (Wheat head blight fungus).